The chain runs to 427 residues: Inward rectifier potassium channel 2 (427 aa).

Over 1–81 the chain is Cytoplasmic; that stretch reads MGSVRTNRYS…IFTTCVDIRW (81 aa). C76 is subject to S-nitrosocysteine. Residues 82 to 106 traverse the membrane as a helical segment; that stretch reads RWMLVIFCLAFVLSWLFFGCVFWLI. Residues 107–128 are Extracellular-facing; it reads ALLHGDLDASKESKACVSEVNS. Residues 129–140 constitute an intramembrane region (helical; Pore-forming); that stretch reads FTAAFLFSIETQ. The pore-forming intramembrane region spans 141 to 147; that stretch reads TTIGYGF. A Selectivity filter motif is present at residues 142–147; that stretch reads TIGYGF. Topologically, residues 148–156 are extracellular; sequence RCVTDECPV. Residues 157-178 form a helical membrane-spanning segment; sequence AVFMVVFQSIVGCIIDAFIIGA. At 179–427 the chain is on the cytoplasmic side; that stretch reads VMAKMAKPKK…PRPLRRESEI (249 aa). The polyphosphoinositide (PIP2)-binding stretch occupies residues 181–208; it reads AKMAKPKKRNETLVFSHNAVIAMRDGKL. The tract at residues 384-427 is disordered; sequence SKEEDDSENGVPESTSTDTPPDIDLHNQASVPLEPRPLRRESEI. A PDZ-binding motif is present at residues 425–427; it reads SEI.

Belongs to the inward rectifier-type potassium channel (TC 1.A.2.1) family. KCNJ2 subfamily. In terms of assembly, homotetramer. Homomultimeric and heteromultimeric association with KCNJ4/Kir2.3. Can form heteromeric channels with Kir2.6/KCNJ18. Associates, via its PDZ-recognition domain, with a complex containing LIN7A, LIN7B, LIN7C, DLG1, CASK and APBA1. In terms of processing, S-nitrosylation increases the open probability and inward rectifying currents.

It is found in the cell membrane. The protein resides in the sarcolemma. It localises to the T-tubule. The catalysed reaction is K(+)(in) = K(+)(out). With respect to regulation, activated by phosphatidylinositol 4,5 biphosphate (PtdIns(4,5)P2). Its function is as follows. Inward rectifier potassium channels are characterized by a greater tendency to allow potassium to flow into the cell rather than out of it. Their voltage dependence is regulated by the concentration of extracellular potassium; as external potassium is raised, the voltage range of the channel opening shifts to more positive voltages. The inward rectification is mainly due to the blockage of outward current by internal magnesium. Can be blocked by extracellular barium and cesium. Probably participates in establishing action potential waveform and excitability of neuronal and muscle tissues. This Bos taurus (Bovine) protein is Inward rectifier potassium channel 2 (KCNJ2).